The chain runs to 87 residues: Small ribosomal subunit protein uS15 (87 aa).

It belongs to the universal ribosomal protein uS15 family. As to quaternary structure, part of the 30S ribosomal subunit. Forms a bridge to the 50S subunit in the 70S ribosome, contacting the 23S rRNA.

In terms of biological role, one of the primary rRNA binding proteins, it binds directly to 16S rRNA where it helps nucleate assembly of the platform of the 30S subunit by binding and bridging several RNA helices of the 16S rRNA. Functionally, forms an intersubunit bridge (bridge B4) with the 23S rRNA of the 50S subunit in the ribosome. The chain is Small ribosomal subunit protein uS15 from Acetivibrio thermocellus (strain ATCC 27405 / DSM 1237 / JCM 9322 / NBRC 103400 / NCIMB 10682 / NRRL B-4536 / VPI 7372) (Clostridium thermocellum).